A 249-amino-acid polypeptide reads, in one-letter code: Small ribosomal subunit protein uS4m (249 aa).

The S4 RNA-binding domain occupies 133–193; that stretch reads RRLDIIIYRA…PEIVNLLRNQ (61 aa).

This sequence belongs to the universal ribosomal protein uS4 family.

The protein localises to the mitochondrion. In Reclinomonas americana, this protein is Small ribosomal subunit protein uS4m (RPS4).